Here is a 338-residue protein sequence, read N- to C-terminus: Alcohol dehydrogenase (338 aa).

Residues Cys38, His61, Glu62, Cys92, Cys95, Cys98, Cys106, and Cys148 each contribute to the Zn(2+) site.

Belongs to the zinc-containing alcohol dehydrogenase family. As to quaternary structure, homotetramer. The cofactor is Zn(2+).

It carries out the reaction a primary alcohol + NAD(+) = an aldehyde + NADH + H(+). The enzyme catalyses a secondary alcohol + NAD(+) = a ketone + NADH + H(+). It catalyses the reaction ethanol + NAD(+) = acetaldehyde + NADH + H(+). The catalysed reaction is 1-propanol + NAD(+) = propanal + NADH + H(+). It carries out the reaction butan-1-ol + NAD(+) = butanal + NADH + H(+). The enzyme catalyses propan-2-ol + NAD(+) = acetone + NADH + H(+). Psychrophilic alcohol dehydrogenase that exhibits a wide range of substrate specificity, oxidizing mainly primary and secondary aliphatic alcohols, utilizing NAD(+) as a cosubstrate. In vitro, shows highest reaction rates for ethanol as a substrate and gradually decreases its reaction rates as the length and branching of the carbon chain of the alcohol substrates increase. To a lesser extent, is also able to reduce aldehydes and ketones. Do not catalyze the further oxidation of aldehydes to carboxylic acids. Cannot use NADP(+) instead of NAD(+). In Moraxella sp. (strain TAE123), this protein is Alcohol dehydrogenase.